The chain runs to 1296 residues: Phosphoribosylformylglycinamidine synthase (1296 aa).

Residues 300–325 (APFSGAATGSGGEIRDEGATGRGSKP) are disordered. ATP is bound by residues 304 to 315 (GAATGSGGEIRD) and Ala675. The Mg(2+) site is built by Glu715, Asn719, and Asp885. Ser887 contacts ATP. Residues 1043–1296 (MAILREQGVN…MFRNARKNVG (254 aa)) enclose the Glutamine amidotransferase type-1 domain. Cys1136 functions as the Nucleophile in the catalytic mechanism. The tract at residues 1232–1253 (TQYPANPNGSPEGITGITSTDG) is disordered. Residues His1261 and Glu1263 contribute to the active site.

This sequence in the N-terminal section; belongs to the FGAMS family. In terms of assembly, monomer.

The protein localises to the cytoplasm. It catalyses the reaction N(2)-formyl-N(1)-(5-phospho-beta-D-ribosyl)glycinamide + L-glutamine + ATP + H2O = 2-formamido-N(1)-(5-O-phospho-beta-D-ribosyl)acetamidine + L-glutamate + ADP + phosphate + H(+). Its pathway is purine metabolism; IMP biosynthesis via de novo pathway; 5-amino-1-(5-phospho-D-ribosyl)imidazole from N(2)-formyl-N(1)-(5-phospho-D-ribosyl)glycinamide: step 1/2. Phosphoribosylformylglycinamidine synthase involved in the purines biosynthetic pathway. Catalyzes the ATP-dependent conversion of formylglycinamide ribonucleotide (FGAR) and glutamine to yield formylglycinamidine ribonucleotide (FGAM) and glutamate. The chain is Phosphoribosylformylglycinamidine synthase from Pseudoalteromonas translucida (strain TAC 125).